The primary structure comprises 774 residues: MARLNEQAMSSVALSTDNLELLRRKFLRQNRDIARVNSTQSLRIRGLENECARLLSENLELRGQVLRLEKELQDNAARRVADHALEVKAKMETQLAELSSLLASLGEPPSKRRLSEERRYAQPRPSVHRSPPLRRARQEADQELLAEQEGRLPPIYENKTYARATMNSEEILALCMQADDSNDSPDIGPPPVSRFVEDDMVIPCSPSPNKNAEAEETETTEQVEESPRALQVPPSLSPPKLDYDRRPNMILFSPPKESRVAEPSKMFSPPPMEPPKQSTSAVPSETIRAGLKRKLNGDNQNEPNKATKLQQGKENGNETGIKKGLSARDPHKRKSIKETATKPRAPLSAKSTNEHIVSPKKPAKPHQVADDFKPVKVHKASKGKEKVDLPAPDKKSAVEETQGNSTSAFTKVEILPPALEPTPEVAEIPETDILITPGTPERASESTVVTHDTPPPAHISSNGETSRPSRRARAAISYTEPNLRDKMRRPTKELFDAVSGEGKFLHRPTSQQQQQQRKGDESAPTSVSKVKVEPSPAVDISSLTSSALFEKEKEKEPQPDEGILSPNGILPSSVDLGRRRRASSFSTAAPAMTIPSVQEQSTLNLPAADETDENAAVEAQIQKELSNSITTRPRGGKGRQSMSRSVPTIPTENYEHEDAQLSTNSASVDLYDFASCASPDSAAPQLEATTGDVPVNKKAPKGSRRASSAASTETTATASAKPRSSRKRASMLVPKKSLWAEELAQEEEDEEDVGNDSGGSLSKGRASRRRSMML.

Residues 41–105 are a coiled coil; it reads SLRIRGLENE…AELSSLLASL (65 aa). Disordered regions lie at residues 106–151, 205–661, and 676–774; these read GEPP…QEGR, SPSP…DAQL, and CASP…SMML. The segment covering 109-120 has biased composition (basic and acidic residues); sequence PSKRRLSEERRY. A compositionally biased stretch (acidic residues) spans 214–224; the sequence is AEETETTEQVE. The span at 297-318 shows a compositional bias: polar residues; it reads GDNQNEPNKATKLQQGKENGNE. Residues 382-398 are compositionally biased toward basic and acidic residues; sequence KGKEKVDLPAPDKKSAV. Over residues 399–409 the composition is skewed to polar residues; sequence EETQGNSTSAF. 2 stretches are compositionally biased toward basic and acidic residues: residues 482–495 and 549–558; these read NLRD…KELF and FEKEKEKEPQ. 2 stretches are compositionally biased toward polar residues: residues 595 to 604 and 640 to 651; these read PSVQEQSTLN and QSMSRSVPTIPT. Residues 706-722 show a composition bias toward low complexity; it reads ASSAASTETTATASAKP. The segment covering 743–754 has biased composition (acidic residues); the sequence is LAQEEEDEEDVG. The segment covering 765–774 has biased composition (basic residues); sequence RASRRRSMML.

This sequence belongs to the shugoshin family.

Its subcellular location is the nucleus. It localises to the chromosome. It is found in the centromere. Plays a central role in chromosome cohesion during cell division by preventing premature dissociation of cohesin complex from centromeres after prophase, when most of cohesin complex dissociates from chromosomes arms. In Neurospora crassa (strain ATCC 24698 / 74-OR23-1A / CBS 708.71 / DSM 1257 / FGSC 987), this protein is Shugoshin (sgo-1).